Consider the following 38-residue polypeptide: Large ribosomal subunit protein bL36 (38 aa).

The protein belongs to the bacterial ribosomal protein bL36 family.

The sequence is that of Large ribosomal subunit protein bL36 from Streptococcus agalactiae serotype III (strain NEM316).